Reading from the N-terminus, the 392-residue chain is DNA-directed RNA polymerase subunit Rpo1C (392 aa).

It belongs to the RNA polymerase beta' chain family. In terms of assembly, part of the 13-subunit RNA polymerase complex.

It localises to the cytoplasm. The enzyme catalyses RNA(n) + a ribonucleoside 5'-triphosphate = RNA(n+1) + diphosphate. Functionally, DNA-dependent RNA polymerase (RNAP) catalyzes the transcription of DNA into RNA using the four ribonucleoside triphosphates as substrates. Forms part of the jaw domain. The chain is DNA-directed RNA polymerase subunit Rpo1C from Saccharolobus solfataricus (strain ATCC 35092 / DSM 1617 / JCM 11322 / P2) (Sulfolobus solfataricus).